Reading from the N-terminus, the 109-residue chain is Ribonuclease P protein component 4 (109 aa).

The Zn(2+) site is built by Cys-65, Cys-68, Cys-94, and Cys-97.

This sequence belongs to the eukaryotic/archaeal RNase P protein component 4 family. Consists of a catalytic RNA component and at least 4-5 protein subunits. Zn(2+) is required as a cofactor.

The protein resides in the cytoplasm. The catalysed reaction is Endonucleolytic cleavage of RNA, removing 5'-extranucleotides from tRNA precursor.. Its function is as follows. Part of ribonuclease P, a protein complex that generates mature tRNA molecules by cleaving their 5'-ends. This Methanococcus vannielii (strain ATCC 35089 / DSM 1224 / JCM 13029 / OCM 148 / SB) protein is Ribonuclease P protein component 4.